The sequence spans 449 residues: Trigger factor (449 aa).

In terms of domain architecture, PPIase FKBP-type spans 162-247 (GDTVTIDYTG…IHEVKSKELP (86 aa)). Positions 427–438 (AKKATKKSTAKK) are enriched in basic residues. The tract at residues 427 to 449 (AKKATKKSTAKKSTKEDEKKADK) is disordered. The segment covering 439 to 449 (STKEDEKKADK) has biased composition (basic and acidic residues).

It belongs to the FKBP-type PPIase family. Tig subfamily.

The protein resides in the cytoplasm. It carries out the reaction [protein]-peptidylproline (omega=180) = [protein]-peptidylproline (omega=0). In terms of biological role, involved in protein export. Acts as a chaperone by maintaining the newly synthesized protein in an open conformation. Functions as a peptidyl-prolyl cis-trans isomerase. The polypeptide is Trigger factor (Lactobacillus gasseri (strain ATCC 33323 / DSM 20243 / BCRC 14619 / CIP 102991 / JCM 1131 / KCTC 3163 / NCIMB 11718 / NCTC 13722 / AM63)).